A 148-amino-acid polypeptide reads, in one-letter code: Arginine repressor (148 aa).

The protein belongs to the ArgR family.

It is found in the cytoplasm. The protein operates within amino-acid biosynthesis; L-arginine biosynthesis [regulation]. In terms of biological role, regulates arginine biosynthesis genes. The protein is Arginine repressor of Chlorobium phaeovibrioides (strain DSM 265 / 1930) (Prosthecochloris vibrioformis (strain DSM 265)).